A 430-amino-acid chain; its full sequence is MHVRSLRAAAPHSFVALWAPLFLLRSALADFSLDNEVHSSFIHRRLRSQERREMQREILSILGLPHRPRPHLQGKHNSAPMFMLDLYNAMAVEESGPDGQGFSYPYKAVFSTQGPPLASLQDSHFLTDADMVMSFVNLVEHDKEFFHPRYHHREFRFDLSKIPEGEAVTAAEFRIYKDYIRERFDNETFQITVYQVLQEHSGRESDLFLLDSRTIWASEEGWLVFDITATSNHWVVNPRHNLGLQLSVETLDGQSINPKLAGLIGRHGPQNKQPFMVAFFKATEVHLRSIRSTGGKQRSQNRSKTPKNQEALRMASVAENSSSDQRQACKKHELYVSFRDLGWQDWIIAPEGYAAYYCEGECAFPLNSYMNATNHAIVQTLVHFINPDTVPKPCCAPTQLNAISVLYFDDSSNVILKKYRNMVVRACGCH.

The signal sequence occupies residues 1 to 29; sequence MHVRSLRAAAPHSFVALWAPLFLLRSALA. Positions 30–291 are excised as a propeptide; that stretch reads DFSLDNEVHS…ATEVHLRSIR (262 aa). Residues N186, N301, N320, and N371 are each glycosylated (N-linked (GlcNAc...) asparagine). The tract at residues 290 to 310 is disordered; that stretch reads IRSTGGKQRSQNRSKTPKNQE. 3 disulfide bridges follow: C329/C395, C358/C427, and C362/C429.

It belongs to the TGF-beta family. In terms of assembly, homodimer; disulfide-linked. Interacts with SOSTDC1. Interacts with TWSG1. Interacts with FBN1 (via N-terminal domain) and FBN2. Interacts with type I receptor ACVR1. Interacts with type II receptor ACVR2A. Interacts with NOG; this interaction inhibits canonical BMP signaling. Interacts with SCUBE3. Interacts with ERFE; the interaction inhibits BMP-induced transcription of HAMP. Interacts with TGFBR3.

Its subcellular location is the secreted. Functionally, growth factor of the TGF-beta superfamily that plays important role in various biological processes, including embryogenesis, hematopoiesis, neurogenesis and skeletal morphogenesis. Initiates the canonical BMP signaling cascade by associating with type I receptor ACVR1 and type II receptor ACVR2A. Once all three components are bound together in a complex at the cell surface, ACVR2A phosphorylates and activates ACVR1. In turn, ACVR1 propagates signal by phosphorylating SMAD1/5/8 that travel to the nucleus and act as activators and repressors of transcription of target genes. For specific functions such as growth cone collapse in developing spinal neurons and chemotaxis of monocytes, also uses BMPR2 as type II receptor. Can also signal through non-canonical pathways such as P38 MAP kinase signaling cascade that promotes brown adipocyte differentiation through activation of target genes, including members of the SOX family of transcription factors. Promotes the expression of HAMP, this is repressed by its interaction with ERFE. This is Bone morphogenetic protein 7 (Bmp7) from Mus musculus (Mouse).